The chain runs to 217 residues: Protein-L-isoaspartate O-methyltransferase (217 aa).

Residue S65 is part of the active site.

It belongs to the methyltransferase superfamily. L-isoaspartyl/D-aspartyl protein methyltransferase family.

The protein resides in the cytoplasm. It carries out the reaction [protein]-L-isoaspartate + S-adenosyl-L-methionine = [protein]-L-isoaspartate alpha-methyl ester + S-adenosyl-L-homocysteine. Its function is as follows. Catalyzes the methyl esterification of L-isoaspartyl residues in peptides and proteins that result from spontaneous decomposition of normal L-aspartyl and L-asparaginyl residues. It plays a role in the repair and/or degradation of damaged proteins. In Methanoregula boonei (strain DSM 21154 / JCM 14090 / 6A8), this protein is Protein-L-isoaspartate O-methyltransferase.